The chain runs to 370 residues: 4-hydroxy-3-methylbut-2-en-1-yl diphosphate synthase (flavodoxin) (370 aa).

[4Fe-4S] cluster is bound by residues C271, C274, C306, and E313.

It belongs to the IspG family. It depends on [4Fe-4S] cluster as a cofactor.

The enzyme catalyses (2E)-4-hydroxy-3-methylbut-2-enyl diphosphate + oxidized [flavodoxin] + H2O + 2 H(+) = 2-C-methyl-D-erythritol 2,4-cyclic diphosphate + reduced [flavodoxin]. It participates in isoprenoid biosynthesis; isopentenyl diphosphate biosynthesis via DXP pathway; isopentenyl diphosphate from 1-deoxy-D-xylulose 5-phosphate: step 5/6. Converts 2C-methyl-D-erythritol 2,4-cyclodiphosphate (ME-2,4cPP) into 1-hydroxy-2-methyl-2-(E)-butenyl 4-diphosphate. The polypeptide is 4-hydroxy-3-methylbut-2-en-1-yl diphosphate synthase (flavodoxin) (Actinobacillus pleuropneumoniae serotype 5b (strain L20)).